Consider the following 452-residue polypeptide: tRNA modification GTPase MnmE (452 aa).

R21, E78, and K118 together coordinate (6S)-5-formyl-5,6,7,8-tetrahydrofolate. The TrmE-type G domain maps to 214–375 (GMKVVIAGRP…LREHLKQSMG (162 aa)). N224 provides a ligand contact to K(+). Residues 224 to 229 (NAGKSS), 243 to 249 (TDIAGTT), and 268 to 271 (DTAG) each bind GTP. A Mg(2+)-binding site is contributed by S228. Residues T243, I245, and T248 each coordinate K(+). Mg(2+) is bound at residue T249. K452 contacts (6S)-5-formyl-5,6,7,8-tetrahydrofolate.

The protein belongs to the TRAFAC class TrmE-Era-EngA-EngB-Septin-like GTPase superfamily. TrmE GTPase family. Homodimer. Heterotetramer of two MnmE and two MnmG subunits. K(+) is required as a cofactor.

The protein localises to the cytoplasm. Exhibits a very high intrinsic GTPase hydrolysis rate. Involved in the addition of a carboxymethylaminomethyl (cmnm) group at the wobble position (U34) of certain tRNAs, forming tRNA-cmnm(5)s(2)U34. The sequence is that of tRNA modification GTPase MnmE from Actinobacillus succinogenes (strain ATCC 55618 / DSM 22257 / CCUG 43843 / 130Z).